We begin with the raw amino-acid sequence, 420 residues long: MTMEKGMSSGEGLPSRSSQVSAGKITAKELETKQSYKEKRGGFVLVHAGAGYHSESKAKEYKHVCKRACQKAIEKLQAGALATDAVTAALVELEDSPFTNAGMGSNLNLLGEIECDASIMDGKSLNFGAVGALSGIKNPVSVANRLLCEGQKGKLSAGRIPPCFLVGEGAYRWAVDHGIPSCPPNIMTTRFSLAAFKRNKRKLELAERVDTDFMQLKKRRQSSEKENDSGTLDTVGAVVVDHEGNVAAAVSSGGLALKHPGRVGQAALYGCGCWAENTGAHNPYSTAVSTSGCGEHLVRTILARECSHALQAEDAHQALLETMQNKFISSPFLASEDGVLGGVIVLRSCRCSAEPDSSQNKQTLLVEFLWSHTTESMCVGYMSAQDGKAKTHISRLPPGAVAGQSVAIEGGVCRLESPVN.

The segment at 1–23 is disordered; it reads MTMEKGMSSGEGLPSRSSQVSAG. Threonine 234 functions as the Nucleophile in the catalytic mechanism.

Belongs to the Ntn-hydrolase family. Intramolecular proteolysis generates 2 subunits, alpha and beta, which reassemble through a non-covalent association to form the fully active enzyme.

Its function is as follows. Protease responsible for KMT2A/MLL1 processing and activation. It also activates KMT2D/MLL2. Through substrate activation, it controls the expression of HOXA genes, and the expression of key cell cycle regulators including CCNA1, CCNB1, CCNE1 and CDKN2A. The sequence is that of Threonine aspartase 1 (TASP1) from Homo sapiens (Human).